We begin with the raw amino-acid sequence, 507 residues long: Probable DNA ligase (507 aa).

Position 209 (Glu-209) interacts with ATP. The N6-AMP-lysine intermediate role is filled by Lys-211. ATP-binding residues include Arg-216, Arg-231, Glu-260, Phe-295, Arg-366, and Lys-372.

It belongs to the ATP-dependent DNA ligase family. Mg(2+) serves as cofactor.

It catalyses the reaction ATP + (deoxyribonucleotide)n-3'-hydroxyl + 5'-phospho-(deoxyribonucleotide)m = (deoxyribonucleotide)n+m + AMP + diphosphate.. Functionally, DNA ligase that seals nicks in double-stranded DNA during DNA replication, DNA recombination and DNA repair. The protein is Probable DNA ligase of Pseudarthrobacter chlorophenolicus (strain ATCC 700700 / DSM 12829 / CIP 107037 / JCM 12360 / KCTC 9906 / NCIMB 13794 / A6) (Arthrobacter chlorophenolicus).